The chain runs to 622 residues: Modification methylase LlaI (622 aa).

This sequence belongs to the N(4)/N(6)-methyltransferase family.

It catalyses the reaction a 2'-deoxyadenosine in DNA + S-adenosyl-L-methionine = an N(6)-methyl-2'-deoxyadenosine in DNA + S-adenosyl-L-homocysteine + H(+). Functionally, an alpha subtype methylase that modifies unknown specific adenine residues, and protects the DNA from cleavage by the LlaI endonuclease. The polypeptide is Modification methylase LlaI (Lactococcus lactis subsp. lactis (Streptococcus lactis)).